A 367-amino-acid chain; its full sequence is Glutamate 5-kinase (367 aa).

Position 10 (lysine 10) interacts with ATP. Positions 50, 137, and 149 each coordinate substrate. Residues 169–170 (TD) and 211–217 (TGGMSTK) contribute to the ATP site. In terms of domain architecture, PUA spans 275–353 (AGEITVDDGA…QQIAEILGYE (79 aa)).

It belongs to the glutamate 5-kinase family.

Its subcellular location is the cytoplasm. It catalyses the reaction L-glutamate + ATP = L-glutamyl 5-phosphate + ADP. It functions in the pathway amino-acid biosynthesis; L-proline biosynthesis; L-glutamate 5-semialdehyde from L-glutamate: step 1/2. In terms of biological role, catalyzes the transfer of a phosphate group to glutamate to form L-glutamate 5-phosphate. The protein is Glutamate 5-kinase of Pectobacterium atrosepticum (strain SCRI 1043 / ATCC BAA-672) (Erwinia carotovora subsp. atroseptica).